The chain runs to 291 residues: 3-hydroxy-5-phosphonooxypentane-2,4-dione thiolase (291 aa).

The Schiff-base intermediate with substrate role is filled by Lys-203.

This sequence belongs to the DeoC/FbaB aldolase family. In terms of assembly, homodecamer.

It localises to the cytoplasm. It catalyses the reaction dihydroxyacetone phosphate + acetyl-CoA = 3-hydroxy-2,4-dioxopentyl phosphate + CoA. Its function is as follows. Involved in the degradation of phospho-AI-2, thereby terminating induction of the lsr operon and closing the AI-2 signaling cycle. Catalyzes the transfer of an acetyl moiety from 3-hydroxy-5-phosphonooxypentane-2,4-dione to CoA to form glycerone phosphate and acetyl-CoA. The polypeptide is 3-hydroxy-5-phosphonooxypentane-2,4-dione thiolase (Yersinia pestis bv. Antiqua (strain Antiqua)).